The chain runs to 343 residues: L-threonine 3-dehydrogenase (343 aa).

C38 serves as a coordination point for Zn(2+). Active-site charge relay system residues include T40 and H43. Residues H63, E64, C93, C96, C99, and C107 each coordinate Zn(2+). NAD(+)-binding positions include I175, D195, R200, 262 to 264, and 286 to 287; these read LGI and IY.

The protein belongs to the zinc-containing alcohol dehydrogenase family. Homotetramer. Zn(2+) is required as a cofactor.

The protein localises to the cytoplasm. It carries out the reaction L-threonine + NAD(+) = (2S)-2-amino-3-oxobutanoate + NADH + H(+). It functions in the pathway amino-acid degradation; L-threonine degradation via oxydo-reductase pathway; glycine from L-threonine: step 1/2. In terms of biological role, catalyzes the NAD(+)-dependent oxidation of L-threonine to 2-amino-3-ketobutyrate. The polypeptide is L-threonine 3-dehydrogenase (Paraburkholderia xenovorans (strain LB400)).